A 468-amino-acid polypeptide reads, in one-letter code: Tumor necrosis factor receptor superfamily member 10A (468 aa).

Positions 1–23 (MAPPPARVHLGAFLAVTPNPGSA) are cleaved as a signal peptide. A disordered region spans residues 17–82 (TPNPGSAASG…APGPRPAREA (66 aa)). A compositionally biased stretch (low complexity) spans 20-34 (PGSAASGTEAAAATP). Topologically, residues 24–239 (ASGTEAAAAT…VHKESGNGHN (216 aa)) are extracellular. Residue arginine 52 is modified to Omega-N-methylarginine. Residues 63–74 (GPSARARAGRAP) are compositionally biased toward low complexity. TNFR-Cys repeat units follow at residues 107 to 145 (SAAT…PGAC), 147 to 188 (RCTE…NTAC), and 189 to 229 (QCKP…DIEC). Cystine bridges form between cysteine 132–cysteine 145, cysteine 148–cysteine 164, cysteine 167–cysteine 180, cysteine 170–cysteine 188, cysteine 190–cysteine 204, cysteine 207–cysteine 221, and cysteine 211–cysteine 229. A glycan (N-linked (GlcNAc...) asparagine) is linked at asparagine 156. The chain crosses the membrane as a helical span at residues 240 to 262 (IWVILVVTLVVPLLLVAVLIVCC). Residues 263-468 (CIGSGCGGDP…DGTGSAVSLE (206 aa)) lie on the Cytoplasmic side of the membrane. In terms of domain architecture, Death spans 365 to 448 (MLFFDKFANI…HAREKIQDLL (84 aa)). Phosphoserine is present on residues serine 424, serine 463, and serine 466.

In terms of assembly, monomer. Homooligomers and heterooligomers with TNFRSF10B. Three TNFRSF10A molecules interact with the TNFSF10 homotrimer. Can interact with TRADD and RIPK1. Interacts with ARAP1. In the absence of stimulation, interacts with BIRC2, DDX3X and GSK3B. The interaction with BIRC2 and DDX3X is further enhanced upon receptor stimulation and accompanied by DDX3X and BIRC2 cleavage. Interacts with ZDHHC3. Interacts with PTPN6; this interaction enables the inhibition of T-cell receptor signaling via LCK. As to quaternary structure, (Microbial infection) Interacts with HCMV protein UL141; this interaction prevents TNFRSF10A cell surface expression. Palmitoylated. Palmitoylation of TNFRSF10A is required for its association with lipid rafts, oligomerization and function in TRAIL-induced cell death. Palmitoylated by ZDHHC3. Widely expressed. High levels are found in spleen, peripheral blood leukocytes, small intestine and thymus, but also in K-562 erythroleukemia cells, MCF-7 breast carcinoma cells and activated T-cells.

Its subcellular location is the cell membrane. The protein resides in the membrane raft. It localises to the cytoplasm. The protein localises to the cytosol. Receptor for the cytotoxic ligand TNFSF10/TRAIL. The adapter molecule FADD recruits caspase-8 to the activated receptor. The resulting death-inducing signaling complex (DISC) performs caspase-8 proteolytic activation which initiates the subsequent cascade of caspases (aspartate-specific cysteine proteases) mediating apoptosis. Promotes the activation of NF-kappa-B. This chain is Tumor necrosis factor receptor superfamily member 10A (TNFRSF10A), found in Homo sapiens (Human).